Here is a 121-residue protein sequence, read N- to C-terminus: Large ribosomal subunit protein uL14 (121 aa).

It belongs to the universal ribosomal protein uL14 family. In terms of assembly, part of the 50S ribosomal subunit. Forms a cluster with proteins L3 and L19. In the 70S ribosome, L14 and L19 interact and together make contacts with the 16S rRNA in bridges B5 and B8.

In terms of biological role, binds to 23S rRNA. Forms part of two intersubunit bridges in the 70S ribosome. This Parasynechococcus marenigrum (strain WH8102) protein is Large ribosomal subunit protein uL14.